The chain runs to 519 residues: Iroquois-class homeodomain protein IRX-4 (519 aa).

The segment at residues 143 to 204 (GTRRKNATRE…NARRRLKKEN (62 aa)) is a DNA-binding region (homeobox; TALE-type). Positions 204–298 (NKMTWPPRNK…VPAAPDGPVK (95 aa)) are disordered. Over residues 213 to 222 (KCADEKRPYA) the composition is skewed to basic and acidic residues. 2 stretches are compositionally biased toward acidic residues: residues 223 to 235 (EGEEEEGGEEEAR) and 257 to 267 (LSDLDDFDPLE).

It belongs to the TALE/IRO homeobox family. Interacts with the vitamin D receptor VDR but doesn't affect its transactivation activity. As to expression, predominantly expressed in cardiac ventricles.

Its subcellular location is the nucleus. Its function is as follows. Likely to be an important mediator of ventricular differentiation during cardiac development. The sequence is that of Iroquois-class homeodomain protein IRX-4 (IRX4) from Homo sapiens (Human).